Consider the following 240-residue polypeptide: 2,3-bisphosphoglycerate-dependent phosphoglycerate mutase 2 (240 aa).

Substrate-binding positions include 8–15, 21–22, arginine 60, 87–90, lysine 98, 114–115, and 183–184; these read RHGQSEWN, TG, ERHY, RR, and GN. Histidine 9 acts as the Tele-phosphohistidine intermediate in catalysis. Residue glutamate 87 is the Proton donor/acceptor of the active site.

Belongs to the phosphoglycerate mutase family. BPG-dependent PGAM subfamily.

The catalysed reaction is (2R)-2-phosphoglycerate = (2R)-3-phosphoglycerate. Its pathway is carbohydrate degradation; glycolysis; pyruvate from D-glyceraldehyde 3-phosphate: step 3/5. Functionally, catalyzes the interconversion of 2-phosphoglycerate and 3-phosphoglycerate. This chain is 2,3-bisphosphoglycerate-dependent phosphoglycerate mutase 2, found in Bacillus cereus (strain ATCC 10987 / NRS 248).